A 1131-amino-acid polypeptide reads, in one-letter code: Protein TOPLESS (1131 aa).

Residues 4-36 form the LisH domain; it reads LSRELVFLILQFLDEEKFKETVHKLEQESGFFF. The 59-residue stretch at 34-92 folds into the CTLH domain; sequence FFFNMKYFEDEVHNGNWDEVEKYLSGFTKVDDNRYSMKIFFEIRKQKYLEALDKHDRPK. Ser-214 carries the post-translational modification Phosphoserine. Residues 286–305 are disordered; the sequence is TPPTNASLDYPSADSEHVSK. WD repeat units follow at residues 353–393, 415–454, 460–501, 504–545, 548–591, 595–634, 639–678, 710–756, 766–805, 833–871, 874–914, 917–956, 967–1005, 1010–1049, and 1060–1102; these read SQGS…RLVQ, EPVV…DMRQ, AHVG…KRHT, GHEA…SRVD, APGR…VKRT, FHKR…LLTA, GGLQ…RLLH, DRSA…EPSQ, LRVA…RNAT, NPEE…TMAT, PPPP…VKSK, GHSK…KQRS, NSAP…CMKQ, ESLA…LRCR, and LSNS…GKWG. The interval 1100–1131 is disordered; it reads KWGVAPPAENGSASGAPTAPSVGASASDQPQR.

In terms of assembly, tetramer. Homodimer. Interacts (via the LisH domain) with WUS (via the C-terminal domain). Interacts with NINJA/AFPH2. Interacts with IAA1; IAA2; IAA3; IAA4; IAA6; IAA8; IAA9; IAA11; IAA13; IAA14; IAA17; IAA18; IAA26; IAA27 and IAA28. Interacts (via the LisH domain) with IAA12/BDL (via domain I). Can form a complex with IAA12 and ARF5. Interacts with AP2 (via EAR motif) and HDA19. Interacts with TIFY5A/JAZ8 (via EAR motif). Interacts with SPEAR3/TIE1. Interacts with SPL (via EAR motif). Interacts with ZAT2 and ZAT3 (via the EAR motif). Interacts with JAZ13 (via EAR motif). Interacts with GIR1 and GIR2. Expressed in embryo and in extraembryonic tissues. Expressed in inflorescences, flowers, floral meristems, developing anthers and ovules. Detected in the vascular tissues, shoot apical meristem, cotyledons and young leaves. Expressed ubiquitously in the pistils, stamens and pollens.

The protein localises to the nucleus. Transcriptional corepressor. May repress the expression of root-promoting genes in the top half of the embryo to allow proper differentiation of the shoot pole during the transition stage of embryogenesis. Regulates the expression of PLT1 and PLT2. Negative regulator of jasmonate responses. Negative regulator of auxin responses. Negative regulator of multiple floral organ identity genes. Required for ovule development. The sequence is that of Protein TOPLESS (TPL) from Arabidopsis thaliana (Mouse-ear cress).